A 51-amino-acid polypeptide reads, in one-letter code: Large ribosomal subunit protein eL40 (51 aa).

Belongs to the eukaryotic ribosomal protein eL40 family.

The polypeptide is Large ribosomal subunit protein eL40 (Thermofilum pendens (strain DSM 2475 / Hrk 5)).